A 517-amino-acid chain; its full sequence is Fluconazole resistance protein 1 (517 aa).

Positions 26-52 (CDSCRIKKTKCDGKKPCNRCTLDNKIC) form a DNA-binding region, zn(2)-C6 fungal-type. 4 disordered regions span residues 106–137 (KSVD…QNST), 250–270 (SAQF…QQQQ), 284–307 (SDIE…PPTS), and 378–403 (GSIQ…VSSF). Residues 113–124 (SSPASSTPNSSS) are compositionally biased toward low complexity. Positions 250–260 (SAQFSKGTFSP) are enriched in polar residues. Residues 261–270 (QQQQLQQQQQ) are compositionally biased toward low complexity. The span at 298–307 (NSGSVSPPTS) shows a compositional bias: polar residues. Over residues 388 to 398 (GSVHKPVRNHS) the composition is skewed to basic residues.

Its subcellular location is the nucleus. Functionally, transcription factor that acts as a negative regulator of fluconazole resistance in C.albicans. Also confers fluconazole resistance in S.cerevisiae by activation of the PDR5 gene. The chain is Fluconazole resistance protein 1 (FCR1) from Candida albicans (Yeast).